The primary structure comprises 392 residues: Methylthioribose-1-phosphate isomerase (392 aa).

Asp-253 serves as the catalytic Proton donor.

This sequence belongs to the eIF-2B alpha/beta/delta subunits family. MtnA subfamily.

Its subcellular location is the cytoplasm. It localises to the nucleus. It carries out the reaction 5-(methylsulfanyl)-alpha-D-ribose 1-phosphate = 5-(methylsulfanyl)-D-ribulose 1-phosphate. It functions in the pathway amino-acid biosynthesis; L-methionine biosynthesis via salvage pathway; L-methionine from S-methyl-5-thio-alpha-D-ribose 1-phosphate: step 1/6. Its function is as follows. Catalyzes the interconversion of methylthioribose-1-phosphate (MTR-1-P) into methylthioribulose-1-phosphate (MTRu-1-P). This is Methylthioribose-1-phosphate isomerase (mri1) from Pyrenophora tritici-repentis (strain Pt-1C-BFP) (Wheat tan spot fungus).